The sequence spans 85 residues: UPF0335 protein Plav_2034 (85 aa).

The protein belongs to the UPF0335 family.

This chain is UPF0335 protein Plav_2034, found in Parvibaculum lavamentivorans (strain DS-1 / DSM 13023 / NCIMB 13966).